An 832-amino-acid polypeptide reads, in one-letter code: Mucosa-associated lymphoid tissue lymphoma translocation protein 1 homolog (832 aa).

A disordered region spans residues 1–39 (MSLWGQPLQASPPLAVRQPPTASSGPSTSPPAGATLNRL). The residue at position 2 (Ser-2) is an N-acetylserine. Residues 19 to 39 (PPTASSGPSTSPPAGATLNRL) show a composition bias toward low complexity. One can recognise a Death domain in the interval 45–132 (RRLSESLDRA…EVLPLLNPPG (88 aa)). Ig-like C2-type domains follow at residues 131–207 (PGLK…FEFS) and 218–314 (AEVT…KKAE). Ser-141 is modified (phosphoserine). 2 disulfide bridges follow: Cys-154-Cys-196 and Cys-257-Cys-299. Residues 356-570 (IGNMSYWEHP…SLSEKRALTD (215 aa)) are caspase-like. The Nuclear export signal signature appears at 377-384 (LTNLLRQL). Residues His-423 and Cys-472 contribute to the active site.

This sequence belongs to the peptidase C14B family. As to quaternary structure, homooligomer; forms oligomers which bind to TRAF6. Forms a complex with CARD14 and MALT1; resulting in the formation of a CBM (CARD14-BCL10-MALT1) complex. Forms a complex with CARD11 and MALT1; resulting in the formation of a CBM (CARD11-BCL10-MALT1) complex. Forms a complex with CARD9 and MALT1; resulting in the formation of a CBM (CARD9-BCL10-MALT1) complex.

Its subcellular location is the cytoplasm. It is found in the perinuclear region. The protein localises to the nucleus. Functionally, protease that enhances BCL10-induced activation: acts via formation of CBM complexes that channel adaptive and innate immune signaling downstream of CARD domain-containing proteins (CARD9, CARD11 and CARD14) to activate NF-kappa-B and MAP kinase p38 pathways which stimulate expression of genes encoding pro-inflammatory cytokines and chemokines. Mediates BCL10 cleavage: MALT1-dependent BCL10 cleavage plays an important role in T-cell antigen receptor-induced integrin adhesion. Involved in the induction of T helper 17 cells (Th17) differentiation. Cleaves RC3H1 and ZC3H12A in response to T-cell receptor (TCR) stimulation which releases their cooperatively repressed targets to promote Th17 cell differentiation. Also mediates cleavage of N4BP1 in T-cells following TCR-mediated activation, leading to N4BP1 inactivation. May also have ubiquitin ligase activity: binds to TRAF6, inducing TRAF6 oligomerization and activation of its ligase activity. The polypeptide is Mucosa-associated lymphoid tissue lymphoma translocation protein 1 homolog (Mus musculus (Mouse)).